The chain runs to 395 residues: GPI-anchor transamidase (395 aa).

A signal peptide spans 1 to 27; it reads MVDTCFLSRGLTTLAGLLLLPFGSLAA. At 28-368 the chain is on the lumenal side; the sequence is SQIEDQAEQF…PKLKDWHPPG (341 aa). Residues D79, I82, E118, and D120 each coordinate Ca(2+). The active-site Proton donor is H164. Residue C206 is the Nucleophile; acyl-thioester intermediate of the active site. C206, S232, and S234 together coordinate a protein. Residues 231–236 are autoinhibitory loop; sequence DSLSHQ. C275 and C280 form a disulfide bridge. The helical transmembrane segment at 369–385 threads the bilayer; the sequence is GFILGLWALIIMVFFKT. Over 386–395 the chain is Cytoplasmic; that stretch reads YGIKHMKFIF.

This sequence belongs to the peptidase C13 family. In terms of assembly, heteropentamer. Part of the GPI-anchor transamidase complex, consisting of PIGK, PIGT, PIGS, PIGU and GAA1. Interacts with GPAA1. Interacts with PIGT; this interaction, via a disulfide link, stabilizes the expression of GAA1 and PIGK and links them to PIGS. Post-translationally, the disulfide bond between PIGK/GPI8 and PIGT is important for normal enzyme activity.

Its subcellular location is the endoplasmic reticulum membrane. It functions in the pathway glycolipid biosynthesis; glycosylphosphatidylinositol-anchor biosynthesis. Its activity is regulated as follows. In the absence of proproteins substrates, exists in an inactive state with a disrupted catalytic site by an autoinhibitory loop. The binding of proprotein substrates, particularly the CSP region, to GPI-T triggers concerted conformational changes that alleviate the inhibition by the autoinhibitory loop. Meanwhile, proprotein residues near the omega- site induce the formation of a catalytic cleft for catalysis, following which the products are released and GPI-T reverts to the inactive state. Its function is as follows. Catalytic subunit of the glycosylphosphatidylinositol-anchor (GPI-anchor) transamidase (GPI-T) complex that catalyzes the formation of the linkage between a proprotein and a GPI-anchor and participates in GPI anchored protein biosynthesis. Recognizes diverse proproteins at a C-terminal signal peptide (CSP) region that lacks consensus sequence and replaces it with a GPI-anchor via a transamidation reaction. Transamidation catalysis reaction follows a two-phase mechanism. In the acyl-enzyme phase, the carbonyl group of the proproteins's omega-site undergoes a nucleophilic attack forming an enzyme-substrate thioester bond. Followed by a general acid catalysis that allows CSP releasing, regenerating the carbonyl, and forming the acyl-enzyme intermediate. In the GPI-anchor attachment phase, the amino group of the GPI-anchor's ethanolamine phosphate, the one on third mannose (EtNP3), mediates a nucleophilic attack on the carbonyl of the acyl-enzyme intermediate, replacing the CSP, allowing GPI-anchor attachment to the omega-residue, therefore forming the product and freeing the enzyme. This is GPI-anchor transamidase from Bos taurus (Bovine).